The sequence spans 304 residues: MTDVAEEAGWATAKTLAEALPYIQIYDRETVVIKYGGHAMGQEDVAKVFAADAVLLKLLGVHPVVVHGGGPQISRMLDKAGVKSTFVDGLRVTDEATMEVAEMVLSGAINKEIANWITLAGAEADVRGVGLSGKDARLITAEKVTRTKKDPDSNIEQAVDLGFVGEPTKVDPQLIEALLTSEHDYIPVVAPIGVSPDGDTFNINADTVAGALAGALKAKRMLMLTDIKGVLDGNGELIREMTIEQARALIDTGVATGGMIPKLENAIHAIESGVEAVVILDGRRPHAMLVELFSEYGAGTLIKR.

Substrate-binding positions include Gly69–Gly70, Arg91, and Asn202.

This sequence belongs to the acetylglutamate kinase family. ArgB subfamily.

The protein resides in the cytoplasm. The enzyme catalyses N-acetyl-L-glutamate + ATP = N-acetyl-L-glutamyl 5-phosphate + ADP. The protein operates within amino-acid biosynthesis; L-arginine biosynthesis; N(2)-acetyl-L-ornithine from L-glutamate: step 2/4. Functionally, catalyzes the ATP-dependent phosphorylation of N-acetyl-L-glutamate. In Caulobacter vibrioides (strain ATCC 19089 / CIP 103742 / CB 15) (Caulobacter crescentus), this protein is Acetylglutamate kinase.